A 481-amino-acid chain; its full sequence is MRWLWPLAVSLAVVLAVGPSEVSGAATLSLGGHRAKVQEQQSRPRRGTKDEGPKEVQHYVPEEWAEYPKPIHPAGLQPTKPLVATSPNPDKDGATSESGQELRTNLTGTPSQRLQIQNPLYPVTESSYSAYAVMLLALVVFAVGIVGNLSVMCIVWHSYYLKSAWNSILASLALWDFLVLFFCLPIVIFNEITKQRLLGDVSCRAVPFMEVSSLGVTTFSLCALGIDRFHVATSTLPKVRPIERCQSILAKLAVIWVGSMMLAVPELLLWQLAQEPTPTMGTVDSCIMKPSADLPESLYSLVMTYQNARMWWYFGCYFCLPILFTVTCQLVTWRVRGPPGRKPECRAGRHEQCESQLNSTVVGLTVVYAFCTLPENICNIVVAYLSTELTRQTLDLLGLINQFSTFFKGAITPVLLLCICRPLGQAFLDCCCCCCCEECGGASDSSATVSADSKLKAEVSSSIYFHKPRESPPLLPLGTPC.

An N-terminal signal peptide occupies residues 1-24 (MRWLWPLAVSLAVVLAVGPSEVSG). Residues 25–134 (AATLSLGGHR…ESSYSAYAVM (110 aa)) lie on the Extracellular side of the membrane. 2 disordered regions span residues 30 to 55 (LGGH…GPKE) and 76 to 107 (LQPT…TNLT). Residues 95–107 (TSESGQELRTNLT) show a composition bias toward polar residues. An N-linked (GlcNAc...) asparagine glycan is attached at N105. Residues 135–155 (LLALVVFAVGIVGNLSVMCIV) form a helical membrane-spanning segment. Residues 156–167 (WHSYYLKSAWNS) lie on the Cytoplasmic side of the membrane. Residues 168-188 (ILASLALWDFLVLFFCLPIVI) traverse the membrane as a helical segment. Over 189 to 205 (FNEITKQRLLGDVSCRA) the chain is Extracellular. The cysteines at positions 203 and 286 are disulfide-linked. A helical membrane pass occupies residues 206 to 226 (VPFMEVSSLGVTTFSLCALGI). Topologically, residues 227–251 (DRFHVATSTLPKVRPIERCQSILAK) are cytoplasmic. The chain crosses the membrane as a helical span at residues 252 to 272 (LAVIWVGSMMLAVPELLLWQL). Residues 273–310 (AQEPTPTMGTVDSCIMKPSADLPESLYSLVMTYQNARM) are Extracellular-facing. Residues 311–331 (WWYFGCYFCLPILFTVTCQLV) form a helical membrane-spanning segment. Residues 332 to 360 (TWRVRGPPGRKPECRAGRHEQCESQLNST) are Cytoplasmic-facing. A helical transmembrane segment spans residues 361-381 (VVGLTVVYAFCTLPENICNIV). Residues 382 to 398 (VAYLSTELTRQTLDLLG) are Extracellular-facing. A helical membrane pass occupies residues 399–419 (LINQFSTFFKGAITPVLLLCI). Over 420 to 481 (CRPLGQAFLD…PPLLPLGTPC (62 aa)) the chain is Cytoplasmic. Residue S471 is modified to Phosphoserine. Position 479 is a phosphothreonine (T479).

Belongs to the G-protein coupled receptor 1 family. Interacts with the PTCH1 receptor. Post-translationally, undergoes metalloprotease-mediated cleavage which reduces its constitutive activity. In terms of processing, ubiquitinated. As to expression, highly expressed in brain.

The protein localises to the cell membrane. The protein resides in the cell projection. It localises to the cilium membrane. Functionally, G-protein coupled receptor. Has been shown to bind the neuroprotective and glioprotective factor prosaposin (PSAP), leading to endocytosis followed by an ERK phosphorylation cascade. However, other studies have shown that prosaposin does not increase activity. It has been suggested that GPR37L1 is a constitutively active receptor which signals through the guanine nucleotide-binding protein G(s) subunit alpha. Participates in the regulation of postnatal cerebellar development by modulating the Shh pathway. Regulates baseline blood pressure in females and protects against cardiovascular stress in males. Mediates inhibition of astrocyte glutamate transporters and reduction in neuronal N-methyl-D-aspartate receptor activity. This Rattus norvegicus (Rat) protein is G-protein coupled receptor 37-like 1 (Gpr37l1).